Reading from the N-terminus, the 278-residue chain is Tryptophan synthase alpha chain (278 aa).

Active-site proton acceptor residues include glutamate 50 and aspartate 61.

Belongs to the TrpA family. As to quaternary structure, tetramer of two alpha and two beta chains.

The enzyme catalyses (1S,2R)-1-C-(indol-3-yl)glycerol 3-phosphate + L-serine = D-glyceraldehyde 3-phosphate + L-tryptophan + H2O. It participates in amino-acid biosynthesis; L-tryptophan biosynthesis; L-tryptophan from chorismate: step 5/5. The alpha subunit is responsible for the aldol cleavage of indoleglycerol phosphate to indole and glyceraldehyde 3-phosphate. The sequence is that of Tryptophan synthase alpha chain from Nitrobacter winogradskyi (strain ATCC 25391 / DSM 10237 / CIP 104748 / NCIMB 11846 / Nb-255).